Reading from the N-terminus, the 236-residue chain is 2-C-methyl-D-erythritol 4-phosphate cytidylyltransferase (236 aa).

Belongs to the IspD/TarI cytidylyltransferase family. IspD subfamily. As to quaternary structure, homodimer.

It carries out the reaction 2-C-methyl-D-erythritol 4-phosphate + CTP + H(+) = 4-CDP-2-C-methyl-D-erythritol + diphosphate. It participates in isoprenoid biosynthesis; isopentenyl diphosphate biosynthesis via DXP pathway; isopentenyl diphosphate from 1-deoxy-D-xylulose 5-phosphate: step 2/6. Catalyzes the formation of 4-diphosphocytidyl-2-C-methyl-D-erythritol from CTP and 2-C-methyl-D-erythritol 4-phosphate (MEP). The sequence is that of 2-C-methyl-D-erythritol 4-phosphate cytidylyltransferase from Salmonella paratyphi A (strain ATCC 9150 / SARB42).